The sequence spans 495 residues: DNA-directed RNA polymerase subunit alpha (495 aa).

Residues 1–301 form an alpha N-terminal domain (alpha-NTD) region; sequence MPYIKHIETK…RMLASLQAPP (301 aa). Disordered regions lie at residues 159-227 and 391-495; these read SLVP…EAPH and QEQV…PEET. The tract at residues 170 to 237 is insert; it reads PRDPLEPEND…IPSMRDDHMT (68 aa). The segment covering 172–186 has biased composition (basic and acidic residues); the sequence is DPLEPENDSKSETKS. Composition is skewed to polar residues over residues 207 to 219 and 391 to 403; these read VNAQ…SNST and QEQV…SQIA. The tract at residues 317-495 is alpha C-terminal domain (alpha-CTD); the sequence is AKEIALTPIE…LSSSQNPEET (179 aa). The segment covering 417–426 has biased composition (basic and acidic residues); sequence RPIDSKETRR. Residues 444–453 are compositionally biased toward basic residues; that stretch reads RKSSKTKVKA. 2 stretches are compositionally biased toward polar residues: residues 464-473 and 486-495; these read KSANLQQAEE and LSSSQNPEET.

It belongs to the RNA polymerase alpha chain family. As to quaternary structure, in plastids the minimal PEP RNA polymerase catalytic core is composed of four subunits: alpha, beta, beta', and beta''. When a (nuclear-encoded) sigma factor is associated with the core the holoenzyme is formed, which can initiate transcription.

The protein resides in the plastid. The protein localises to the chloroplast. The catalysed reaction is RNA(n) + a ribonucleoside 5'-triphosphate = RNA(n+1) + diphosphate. Its function is as follows. DNA-dependent RNA polymerase catalyzes the transcription of DNA into RNA using the four ribonucleoside triphosphates as substrates. The protein is DNA-directed RNA polymerase subunit alpha of Nephroselmis olivacea (Green alga).